Consider the following 496-residue polypeptide: Aspartyl/glutamyl-tRNA(Asn/Gln) amidotransferase subunit B (496 aa).

It belongs to the GatB/GatE family. GatB subfamily. Heterotrimer of A, B and C subunits.

It carries out the reaction L-glutamyl-tRNA(Gln) + L-glutamine + ATP + H2O = L-glutaminyl-tRNA(Gln) + L-glutamate + ADP + phosphate + H(+). The catalysed reaction is L-aspartyl-tRNA(Asn) + L-glutamine + ATP + H2O = L-asparaginyl-tRNA(Asn) + L-glutamate + ADP + phosphate + 2 H(+). Functionally, allows the formation of correctly charged Asn-tRNA(Asn) or Gln-tRNA(Gln) through the transamidation of misacylated Asp-tRNA(Asn) or Glu-tRNA(Gln) in organisms which lack either or both of asparaginyl-tRNA or glutaminyl-tRNA synthetases. The reaction takes place in the presence of glutamine and ATP through an activated phospho-Asp-tRNA(Asn) or phospho-Glu-tRNA(Gln). The sequence is that of Aspartyl/glutamyl-tRNA(Asn/Gln) amidotransferase subunit B from Natronomonas pharaonis (strain ATCC 35678 / DSM 2160 / CIP 103997 / JCM 8858 / NBRC 14720 / NCIMB 2260 / Gabara) (Halobacterium pharaonis).